Consider the following 140-residue polypeptide: Small ribosomal subunit protein uS12 (140 aa).

A 3-methylthioaspartic acid modification is found at D103. The segment at 120–140 (GVQKRMQARSKYGAKRPKKGK) is disordered. A compositionally biased stretch (basic residues) spans 125–140 (MQARSKYGAKRPKKGK).

The protein belongs to the universal ribosomal protein uS12 family. In terms of assembly, part of the 30S ribosomal subunit. Contacts proteins S8 and S17. May interact with IF1 in the 30S initiation complex.

Its function is as follows. With S4 and S5 plays an important role in translational accuracy. In terms of biological role, interacts with and stabilizes bases of the 16S rRNA that are involved in tRNA selection in the A site and with the mRNA backbone. Located at the interface of the 30S and 50S subunits, it traverses the body of the 30S subunit contacting proteins on the other side and probably holding the rRNA structure together. The combined cluster of proteins S8, S12 and S17 appears to hold together the shoulder and platform of the 30S subunit. This is Small ribosomal subunit protein uS12 from Desulfitobacterium hafniense (strain Y51).